The chain runs to 180 residues: MGNFHATTIFAVHHNGECAMAGDGQVTMGNAVVMKHTARKVRRLFQGKVLAGFAGSVADAFTLFEMFEGKLEEYNGNLQRAAVEMAKQWRGDKMLRQLEAMLIVMDKTTMLLVSGTGEVIEPDDGILAIGSGGNYALSAGRALKQYASEHLTAKQIAKASLEIAGDICVYTNHNIIVEEL.

The active site involves Thr-7. Positions 165, 168, and 171 each coordinate Na(+).

It belongs to the peptidase T1B family. HslV subfamily. A double ring-shaped homohexamer of HslV is capped on each side by a ring-shaped HslU homohexamer. The assembly of the HslU/HslV complex is dependent on binding of ATP.

It is found in the cytoplasm. It carries out the reaction ATP-dependent cleavage of peptide bonds with broad specificity.. Allosterically activated by HslU binding. Functionally, protease subunit of a proteasome-like degradation complex believed to be a general protein degrading machinery. In Bacillus cereus (strain G9842), this protein is ATP-dependent protease subunit HslV.